The primary structure comprises 299 residues: 4-hydroxy-tetrahydrodipicolinate synthase (299 aa).

Threonine 47 lines the pyruvate pocket. Residue tyrosine 136 is the Proton donor/acceptor of the active site. The Schiff-base intermediate with substrate role is filled by lysine 164. Residue alanine 205 coordinates pyruvate.

It belongs to the DapA family. Homotetramer; dimer of dimers.

It is found in the cytoplasm. The catalysed reaction is L-aspartate 4-semialdehyde + pyruvate = (2S,4S)-4-hydroxy-2,3,4,5-tetrahydrodipicolinate + H2O + H(+). It participates in amino-acid biosynthesis; L-lysine biosynthesis via DAP pathway; (S)-tetrahydrodipicolinate from L-aspartate: step 3/4. Functionally, catalyzes the condensation of (S)-aspartate-beta-semialdehyde [(S)-ASA] and pyruvate to 4-hydroxy-tetrahydrodipicolinate (HTPA). This Pediococcus pentosaceus (strain ATCC 25745 / CCUG 21536 / LMG 10740 / 183-1w) protein is 4-hydroxy-tetrahydrodipicolinate synthase.